Here is a 595-residue protein sequence, read N- to C-terminus: Arginine--tRNA ligase (595 aa).

Positions 132–142 (ANPTGPLHVGH) match the 'HIGH' region motif.

This sequence belongs to the class-I aminoacyl-tRNA synthetase family. In terms of assembly, monomer.

The protein localises to the cytoplasm. The enzyme catalyses tRNA(Arg) + L-arginine + ATP = L-arginyl-tRNA(Arg) + AMP + diphosphate. The polypeptide is Arginine--tRNA ligase (Cupriavidus necator (strain ATCC 17699 / DSM 428 / KCTC 22496 / NCIMB 10442 / H16 / Stanier 337) (Ralstonia eutropha)).